A 567-amino-acid polypeptide reads, in one-letter code: DNA ligase B (567 aa).

Catalysis depends on Lys-132, which acts as the N6-AMP-lysine intermediate.

Belongs to the NAD-dependent DNA ligase family. LigB subfamily.

The enzyme catalyses NAD(+) + (deoxyribonucleotide)n-3'-hydroxyl + 5'-phospho-(deoxyribonucleotide)m = (deoxyribonucleotide)n+m + AMP + beta-nicotinamide D-nucleotide.. Functionally, catalyzes the formation of phosphodiester linkages between 5'-phosphoryl and 3'-hydroxyl groups in double-stranded DNA using NAD as a coenzyme and as the energy source for the reaction. This is DNA ligase B from Yersinia pestis bv. Antiqua (strain Angola).